The sequence spans 400 residues: PHD finger protein 24 (400 aa).

The N-myristoyl glycine moiety is linked to residue glycine 2. The span at 29 to 38 shows a compositional bias: basic and acidic residues; the sequence is RDRPSIRRGG. The tract at residues 29–65 is disordered; the sequence is RDRPSIRRGGELPGSRRGTVEGSVQEVQEEKEAEASA. Position 36 is an omega-N-methylarginine (arginine 36). Residue serine 43 is modified to Phosphoserine. Threonine 47 bears the Phosphothreonine mark. Residue serine 51 is modified to Phosphoserine. Residues 129 to 190 form a PHD-type zinc finger; sequence NDEMCDVCEV…TGWSCYYCDN (62 aa). Residue arginine 307 is modified to Omega-N-methylarginine.

This Mus musculus (Mouse) protein is PHD finger protein 24.